The sequence spans 150 residues: Cell division protein SepF (150 aa).

Belongs to the SepF family. As to quaternary structure, homodimer. Interacts with FtsZ.

The protein localises to the cytoplasm. Its function is as follows. Cell division protein that is part of the divisome complex and is recruited early to the Z-ring. Probably stimulates Z-ring formation, perhaps through the cross-linking of FtsZ protofilaments. Its function overlaps with FtsA. This Clostridium kluyveri (strain NBRC 12016) protein is Cell division protein SepF.